We begin with the raw amino-acid sequence, 453 residues long: Homogentisate 1,2-dioxygenase (453 aa).

His306 acts as the Proton acceptor in catalysis. Residues His349 and Glu355 each contribute to the Fe cation site. Homogentisate contacts are provided by Tyr364 and His385. Residue His385 coordinates Fe cation.

It belongs to the homogentisate dioxygenase family. In terms of assembly, hexamer; dimer of trimers. The cofactor is Fe cation.

The enzyme catalyses homogentisate + O2 = 4-maleylacetoacetate + H(+). The protein operates within amino-acid degradation; L-phenylalanine degradation; acetoacetate and fumarate from L-phenylalanine: step 4/6. Functionally, involved in the catabolism of homogentisate (2,5-dihydroxyphenylacetate or 2,5-OH-PhAc), a central intermediate in the degradation of phenylalanine and tyrosine. Catalyzes the oxidative ring cleavage of the aromatic ring of homogentisate to yield maleylacetoacetate. In Rhizobium leguminosarum bv. trifolii (strain WSM2304), this protein is Homogentisate 1,2-dioxygenase.